Consider the following 468-residue polypeptide: 3-isopropylmalate dehydratase large subunit (468 aa).

[4Fe-4S] cluster is bound by residues Cys-346, Cys-406, and Cys-409.

The protein belongs to the aconitase/IPM isomerase family. LeuC type 1 subfamily. As to quaternary structure, heterodimer of LeuC and LeuD. [4Fe-4S] cluster is required as a cofactor.

It carries out the reaction (2R,3S)-3-isopropylmalate = (2S)-2-isopropylmalate. Its pathway is amino-acid biosynthesis; L-leucine biosynthesis; L-leucine from 3-methyl-2-oxobutanoate: step 2/4. Its function is as follows. Catalyzes the isomerization between 2-isopropylmalate and 3-isopropylmalate, via the formation of 2-isopropylmaleate. The polypeptide is 3-isopropylmalate dehydratase large subunit (Cyanothece sp. (strain PCC 7425 / ATCC 29141)).